The sequence spans 128 residues: Large ribosomal subunit protein bL20 (128 aa).

It belongs to the bacterial ribosomal protein bL20 family.

Its function is as follows. Binds directly to 23S ribosomal RNA and is necessary for the in vitro assembly process of the 50S ribosomal subunit. It is not involved in the protein synthesizing functions of that subunit. The polypeptide is Large ribosomal subunit protein bL20 (Kocuria rhizophila (strain ATCC 9341 / DSM 348 / NBRC 103217 / DC2201)).